A 206-amino-acid chain; its full sequence is Small ribosomal subunit protein uS4 (206 aa).

One can recognise an S4 RNA-binding domain in the interval 96-156 (GRLDNVVYRM…EKAKKQSRVK (61 aa)).

Belongs to the universal ribosomal protein uS4 family. Part of the 30S ribosomal subunit. Contacts protein S5. The interaction surface between S4 and S5 is involved in control of translational fidelity.

Its function is as follows. One of the primary rRNA binding proteins, it binds directly to 16S rRNA where it nucleates assembly of the body of the 30S subunit. In terms of biological role, with S5 and S12 plays an important role in translational accuracy. The sequence is that of Small ribosomal subunit protein uS4 from Shigella flexneri.